A 269-amino-acid polypeptide reads, in one-letter code: Regulating synaptic membrane exocytosis protein 4 (269 aa).

Residues 115–233 enclose the C2 domain; it reads PMGDVEIGLQ…DLTTLAVGWY (119 aa). Serine 254 and serine 257 each carry phosphoserine.

In terms of assembly, binds PPFIA3. Does not bind RAB3.

The protein resides in the synapse. Its function is as follows. Regulates synaptic membrane exocytosis. In Homo sapiens (Human), this protein is Regulating synaptic membrane exocytosis protein 4 (RIMS4).